A 230-amino-acid polypeptide reads, in one-letter code: Response regulator MprA (230 aa).

The 115-residue stretch at 4-118 folds into the Response regulatory domain; it reads RILVVDDDRA…ELLARMRALL (115 aa). Position 48 is a 4-aspartylphosphate (D48). The ompR/PhoB-type DNA-binding region spans 129-227; the sequence is SMAMRFSDLT…VRGVGYVLRE (99 aa).

Post-translationally, phosphorylated and dephosphorylated by MprB.

It is found in the cytoplasm. Member of the two-component regulatory system MprB/MprA which contributes to maintaining a balance among several systems involved in stress resistance and is required for establishment and maintenance of persistent infection in the host. Functions as a transcriptional regulator that recognizes a 19-bp nucleotide motif comprizing two loosely conserved 8-bp direct DNA-binding motif repeats separated by a 3-bp spacer region. This Mycobacterium tuberculosis (strain ATCC 25177 / H37Ra) protein is Response regulator MprA (mprA).